Here is a 252-residue protein sequence, read N- to C-terminus: Imidazole glycerol phosphate synthase subunit HisF (252 aa).

Residues D11 and D130 contribute to the active site.

This sequence belongs to the HisA/HisF family. In terms of assembly, heterodimer of HisH and HisF.

The protein localises to the cytoplasm. It carries out the reaction 5-[(5-phospho-1-deoxy-D-ribulos-1-ylimino)methylamino]-1-(5-phospho-beta-D-ribosyl)imidazole-4-carboxamide + L-glutamine = D-erythro-1-(imidazol-4-yl)glycerol 3-phosphate + 5-amino-1-(5-phospho-beta-D-ribosyl)imidazole-4-carboxamide + L-glutamate + H(+). Its pathway is amino-acid biosynthesis; L-histidine biosynthesis; L-histidine from 5-phospho-alpha-D-ribose 1-diphosphate: step 5/9. IGPS catalyzes the conversion of PRFAR and glutamine to IGP, AICAR and glutamate. The HisF subunit catalyzes the cyclization activity that produces IGP and AICAR from PRFAR using the ammonia provided by the HisH subunit. This chain is Imidazole glycerol phosphate synthase subunit HisF, found in Bacillus pumilus (strain SAFR-032).